We begin with the raw amino-acid sequence, 101 residues long: Small ribosomal subunit protein uS14A (101 aa).

The interval 31–74 (IRKPSTPEADRAAAQAALQRLPRDASPVRLRNRDAADGRPRGHL) is disordered. Positions 61 to 70 (RNRDAADGRP) are enriched in basic and acidic residues.

Belongs to the universal ribosomal protein uS14 family. Part of the 30S ribosomal subunit. Contacts proteins S3 and S10.

Its function is as follows. Binds 16S rRNA, required for the assembly of 30S particles and may also be responsible for determining the conformation of the 16S rRNA at the A site. The protein is Small ribosomal subunit protein uS14A of Nocardia farcinica (strain IFM 10152).